A 97-amino-acid polypeptide reads, in one-letter code: Citrate lyase acyl carrier protein (97 aa).

An O-(phosphoribosyl dephospho-coenzyme A)serine modification is found at Ser-14.

Belongs to the CitD family. Oligomer with a subunit composition of (alpha,beta,gamma)6.

The protein resides in the cytoplasm. Functionally, covalent carrier of the coenzyme of citrate lyase. The chain is Citrate lyase acyl carrier protein from Klebsiella pneumoniae subsp. pneumoniae (strain ATCC 700721 / MGH 78578).